Reading from the N-terminus, the 605-residue chain is Pyruvate decarboxylase 1 (605 aa).

Substrate is bound by residues D67 and H154. A thiamine pyrophosphate binding region spans residues 432–514 (DSWFNCQKLR…FLINNGGYTI (83 aa)). The Mg(2+) site is built by D482, N509, and G511. E515 contributes to the substrate binding site.

The protein belongs to the TPP enzyme family. Homotetramer. Requires a metal cation as cofactor. Thiamine diphosphate is required as a cofactor.

It carries out the reaction a 2-oxocarboxylate + H(+) = an aldehyde + CO2. This Oryza sativa subsp. japonica (Rice) protein is Pyruvate decarboxylase 1 (PDC1).